A 508-amino-acid polypeptide reads, in one-letter code: MGLPWYRVHTVVLNDPGRLLSVHIMHTALVAGWAGSMALYELAVFDPSDPVLDPMWRQGMFVIPFMTRLGITNSWGGWNITGGTITNPGLWSYEGVAGAHIVFSGLCFLAAIWHWVYWDLEIFCDERTGKPSLDLPKIFGIHLFLSGVACFGFGAFHVTGLYGPGIWVSDPYGLTGKVQPVNPAWGVEGFDPFVPGGIASHHIAAGTLGILAGLFHLSVRPPQRLYKGLRMGNIETVLSSSIAAVFFAAFVVAGTMWYGSATTPIELFGPTRYQWDQGYFQQEIYRRVSAGLAENPSLSEVWSKIPEKLAFYDYIGNNPAKGGLFRAGSMDNGDGIAVGWLGHPVFRNKEGRELFVRRMPTFFETFPVVLVDGDGIVRADVPFRRAESKYSVEQVGVTVEFYGGELNGVSYSDPATVKKYARRAQLGEIFELDRATLKSDGVFRSSPRGWFTFGHASFALLFFFGHIWHGARTLFRDVFAGIDPDLDAQVEFGAFQKLGDPTTKRQAV.

Transmembrane regions (helical) follow at residues 21–36 (SVHI…WAGS), 101–115 (IVFS…IWHW), 140–156 (GIHL…FGAF), 203–218 (IAAG…FHLS), 237–252 (VLSS…AFVV), and 457–472 (SFAL…HGAR).

It belongs to the PsbB/PsbC family. PsbB subfamily. As to quaternary structure, PSII is composed of 1 copy each of membrane proteins PsbA, PsbB, PsbC, PsbD, PsbE, PsbF, PsbH, PsbI, PsbJ, PsbK, PsbL, PsbM, PsbT, PsbX, PsbY, PsbZ, Psb30/Ycf12, at least 3 peripheral proteins of the oxygen-evolving complex and a large number of cofactors. It forms dimeric complexes. Binds multiple chlorophylls. PSII binds additional chlorophylls, carotenoids and specific lipids. serves as cofactor.

Its subcellular location is the plastid. It localises to the chloroplast thylakoid membrane. In terms of biological role, one of the components of the core complex of photosystem II (PSII). It binds chlorophyll and helps catalyze the primary light-induced photochemical processes of PSII. PSII is a light-driven water:plastoquinone oxidoreductase, using light energy to abstract electrons from H(2)O, generating O(2) and a proton gradient subsequently used for ATP formation. In Aethionema cordifolium (Lebanon stonecress), this protein is Photosystem II CP47 reaction center protein.